Reading from the N-terminus, the 407-residue chain is Heparan-sulfate 6-O-sulfotransferase 1-B (407 aa).

The Cytoplasmic portion of the chain corresponds to 8–14 (MVERTSK). A helical; Signal-anchor for type II membrane protein membrane pass occupies residues 15-35 (FLLIVVGSVFFMLILYQYVAP). The Lumenal segment spans residues 36–407 (GVINFGSPHG…DYMNHIINGW (372 aa)). 92–100 (HIQKTGGTT) is a binding site for 3'-phosphoadenylyl sulfate. Substrate-binding positions include 122-123 (KK), Arg139, Trp144, and His149. The active-site Proton acceptor is the His149. 2 residues coordinate 3'-phosphoadenylyl sulfate: Arg183 and Ser191. Substrate contacts are provided by His195 and Trp202. The N-linked (GlcNAc...) asparagine glycan is linked to Asn262. 315–317 (MQY) contributes to the 3'-phosphoadenylyl sulfate binding site. A glycan (N-linked (GlcNAc...) asparagine) is linked at Asn318. Position 321-322 (321-322 (RA)) interacts with 3'-phosphoadenylyl sulfate. Asn329 carries an N-linked (GlcNAc...) asparagine glycan.

It belongs to the sulfotransferase 6 family. During early somitogenesis, first expressed in floor plate and somites. During mid-somitogenesis, expressed strongly in somites and more weakly in eye and hindbrain. During late somitogenesis, expressed in eye, hindbrain and posterior somites. At 24 hours post-fertilization (hpf), expressed in lens, forebrain, hindbrain, otic vesicle, anterior spinal cord neurons and posterior somites. At 36 hpf, expressed in the retinal ciliary marginal zone, brain, pancreas and weakly in pectoral fin. At 48 hpf, expressed in the retinal ciliary marginal zone, retinal ganglion cells, rhombomeres, otic vesicle and weakly in pectoral fin.

It localises to the membrane. It catalyses the reaction alpha-D-glucosaminyl-[heparan sulfate](n) + 3'-phosphoadenylyl sulfate = 6-sulfo-alpha-D-glucosaminyl-[heparan sulfate](n) + adenosine 3',5'-bisphosphate + H(+). In terms of biological role, 6-O-sulfation enzyme which catalyzes the transfer of sulfate from 3'-phosphoadenosine 5'-phosphosulfate (PAPS) to position 6 of the N-sulfoglucosamine residue (GlcNS) of heparan sulfate. The sequence is that of Heparan-sulfate 6-O-sulfotransferase 1-B from Danio rerio (Zebrafish).